The chain runs to 156 residues: Cyclin-dependent kinase inhibitor 2A (156 aa).

N-acetylmethionine is present on Met-1. A phosphoserine mark is found at Ser-7 and Ser-8. ANK repeat units lie at residues 11 to 40, 44 to 72, 77 to 106, and 110 to 139; these read PSAD…LPNA, YGRR…EPNC, TLTR…RLDV, and WGRL…GTRG. A phosphoserine mark is found at Ser-140 and Ser-152.

It belongs to the CDKN2 cyclin-dependent kinase inhibitor family. Heterodimer with CDK4 or CDK6. Predominant p16 complexes contained CDK6. Interacts with CDK4 (both 'T-172'-phosphorylated and non-phosphorylated forms); the interaction inhibits cyclin D-CDK4 kinase activity. Interacts with ISCO2. Post-translationally, phosphorylation seems to increase interaction with CDK4. As to expression, widely expressed but not detected in brain or skeletal muscle. Isoform 3 is pancreas-specific.

Its subcellular location is the cytoplasm. The protein resides in the nucleus. Functionally, acts as a negative regulator of the proliferation of normal cells by interacting strongly with CDK4 and CDK6. This inhibits their ability to interact with cyclins D and to phosphorylate the retinoblastoma protein. The polypeptide is Cyclin-dependent kinase inhibitor 2A (Homo sapiens (Human)).